The primary structure comprises 122 residues: Cytochrome c-556 (122 aa).

Heme contacts are provided by methionine 11, cysteine 111, cysteine 114, and histidine 115. Heme c is bound by residues methionine 11, cysteine 111, cysteine 114, and histidine 115.

Monomer. In terms of processing, binds 1 heme c group covalently per subunit.

Functionally, low-spin monoheme cytochrome c. The protein is Cytochrome c-556 of Agrobacterium tumefaciens (strain II Chrys).